Reading from the N-terminus, the 302-residue chain is Nucleotide-binding protein RHOS4_02640 (302 aa).

An ATP-binding site is contributed by 15–22 (GPSGAGRT). Residue 62–65 (DVRN) participates in GTP binding.

This sequence belongs to the RapZ-like family.

Displays ATPase and GTPase activities. In Cereibacter sphaeroides (strain ATCC 17023 / DSM 158 / JCM 6121 / CCUG 31486 / LMG 2827 / NBRC 12203 / NCIMB 8253 / ATH 2.4.1.) (Rhodobacter sphaeroides), this protein is Nucleotide-binding protein RHOS4_02640.